The following is a 55-amino-acid chain: Large ribosomal subunit protein bL33 (55 aa).

It belongs to the bacterial ribosomal protein bL33 family.

The sequence is that of Large ribosomal subunit protein bL33 from Rhodopseudomonas palustris (strain BisB5).